The following is a 425-amino-acid chain: Type I restriction enzyme MjaVII specificity subunit (425 aa).

Residues 9-168 form a target recognition domain 1 region; it reads KKTEIGEIPE…KSFKIPLPPL (160 aa). The central conserved region (CCR) stretch occupies residues 169–208; that stretch reads EEQKQIAKILTKIDEGIEIIEKSINKLERIKKGLMHKLLT. Residues 169 to 208 are a coiled coil; that stretch reads EEQKQIAKILTKIDEGIEIIEKSINKLERIKKGLMHKLLT. A target recognition domain 2 region spans residues 209–368; it reads KGIGHSRFKK…TFKELSKSML (160 aa). A coiled-coil region spans residues 369-418; the sequence is ENFKIPLPPLEEQKQIAKILSSVDKSIELKKQKKEKLQRMKKKIMELLLT. The tract at residues 369–418 is distal conserved region (DCR); the sequence is ENFKIPLPPLEEQKQIAKILSSVDKSIELKKQKKEKLQRMKKKIMELLLT.

It belongs to the type-I restriction system S methylase family. In terms of assembly, the type I restriction/modification system is composed of three polypeptides R, M and S.

In terms of biological role, the specificity (S) subunit of a type I restriction enzyme; this subunit dictates DNA sequence specificity. The M and S subunits together form a methyltransferase (MTase) that methylates A-3 on the top and bottom strands of the sequence 5'-CAAN(7)TGG-3'. In the presence of the R subunit the complex can also act as an endonuclease, binding to the same target sequence but cutting the DNA some distance from this site. Whether the DNA is cut or modified depends on the methylation state of the target sequence. When the target site is unmodified, the DNA is cut. When the target site is hemimethylated, the complex acts as a maintenance MTase modifying the DNA so that both strands become methylated. After locating a non-methylated recognition site, the enzyme complex serves as a molecular motor that translocates DNA in an ATP-dependent manner until a collision occurs that triggers cleavage. The chain is Type I restriction enzyme MjaVII specificity subunit from Methanocaldococcus jannaschii (strain ATCC 43067 / DSM 2661 / JAL-1 / JCM 10045 / NBRC 100440) (Methanococcus jannaschii).